Here is a 194-residue protein sequence, read N- to C-terminus: Protein cholesin (194 aa).

The disordered stretch occupies residues 1 to 83; sequence MAKQKRKVPE…RKKEERQRLR (83 aa). Residues Ser23 and Ser59 each carry the phosphoserine modification. Positions 61 to 83 are enriched in basic and acidic residues; it reads EEQRVLERKLKKERKKEERQRLR. Phosphoserine occurs at positions 97 and 175.

Secreted from the instestine, secretion is induced by feeding and cholesterol absorption.

The protein resides in the secreted. Hormone secreted from the intestine in response to cholesterol, where it acts to inhibit cholesterol synthesis in the liver and VLDL secretion,leading to a reduction in circulating cholesterol levels. Acts through binding to its receptor, GPR146. The chain is Protein cholesin from Homo sapiens (Human).